We begin with the raw amino-acid sequence, 80 residues long: Small ribosomal subunit protein uS17 (80 aa).

This sequence belongs to the universal ribosomal protein uS17 family. In terms of assembly, part of the 30S ribosomal subunit.

In terms of biological role, one of the primary rRNA binding proteins, it binds specifically to the 5'-end of 16S ribosomal RNA. This chain is Small ribosomal subunit protein uS17, found in Beijerinckia indica subsp. indica (strain ATCC 9039 / DSM 1715 / NCIMB 8712).